The primary structure comprises 469 residues: 3-isopropylmalate dehydratase large subunit (469 aa).

The [4Fe-4S] cluster site is built by Cys-349, Cys-410, and Cys-413.

It belongs to the aconitase/IPM isomerase family. LeuC type 1 subfamily. In terms of assembly, heterodimer of LeuC and LeuD. [4Fe-4S] cluster serves as cofactor.

The catalysed reaction is (2R,3S)-3-isopropylmalate = (2S)-2-isopropylmalate. Its pathway is amino-acid biosynthesis; L-leucine biosynthesis; L-leucine from 3-methyl-2-oxobutanoate: step 2/4. Its function is as follows. Catalyzes the isomerization between 2-isopropylmalate and 3-isopropylmalate, via the formation of 2-isopropylmaleate. In Neisseria meningitidis serogroup B (strain ATCC BAA-335 / MC58), this protein is 3-isopropylmalate dehydratase large subunit.